The primary structure comprises 252 residues: Imidazole glycerol phosphate synthase subunit HisF (252 aa).

Catalysis depends on residues Asp11 and Asp130.

The protein belongs to the HisA/HisF family. Heterodimer of HisH and HisF.

The protein resides in the cytoplasm. It catalyses the reaction 5-[(5-phospho-1-deoxy-D-ribulos-1-ylimino)methylamino]-1-(5-phospho-beta-D-ribosyl)imidazole-4-carboxamide + L-glutamine = D-erythro-1-(imidazol-4-yl)glycerol 3-phosphate + 5-amino-1-(5-phospho-beta-D-ribosyl)imidazole-4-carboxamide + L-glutamate + H(+). It participates in amino-acid biosynthesis; L-histidine biosynthesis; L-histidine from 5-phospho-alpha-D-ribose 1-diphosphate: step 5/9. IGPS catalyzes the conversion of PRFAR and glutamine to IGP, AICAR and glutamate. The HisF subunit catalyzes the cyclization activity that produces IGP and AICAR from PRFAR using the ammonia provided by the HisH subunit. This Aromatoleum aromaticum (strain DSM 19018 / LMG 30748 / EbN1) (Azoarcus sp. (strain EbN1)) protein is Imidazole glycerol phosphate synthase subunit HisF.